A 48-amino-acid chain; its full sequence is Large ribosomal subunit protein bL33A (48 aa).

The protein belongs to the bacterial ribosomal protein bL33 family.

The chain is Large ribosomal subunit protein bL33A from Streptococcus pyogenes serotype M28 (strain MGAS6180).